The primary structure comprises 367 residues: Protein P39 (367 aa).

Coiled-coil stretches lie at residues 165–202 and 235–308; these read REGE…SKQQ and EMIE…SDRL.

Its function is as follows. Might be involved in virion assembly and vector-mediated transmission of the virus. This chain is Protein P39, found in Peanut clump virus (isolate 87/TGTA2) (PCV).